A 373-amino-acid polypeptide reads, in one-letter code: Coiled-coil domain-containing protein 34 (373 aa).

Disordered stretches follow at residues 1–112 (MWAA…SLRG) and 118–137 (CAST…QVRL). Ser-52 bears the Phosphoserine mark. A compositionally biased stretch (polar residues) spans 61–76 (NSTRSLLSPLGHQSFQ). Positions 77–101 (FDEDDGDGEDEEDVDDEEDVDEDAH) are enriched in acidic residues. The stretch at 152 to 286 (KEKEERDRLQ…QEWLENAKHK (135 aa)) forms a coiled coil. Residues 324-352 (IHMPPPKEAKDLSGRKSKRPVISQPHKSS) are disordered. Positions 328–337 (PPKEAKDLSG) are enriched in basic and acidic residues.

Expressed in sperm.

Its subcellular location is the cell projection. The protein resides in the cilium. The protein localises to the flagellum. Involved in spermatogenesis. Has a probable role in anterograde intraflagellar transport which is essential for the formation of sperm flagella. The protein is Coiled-coil domain-containing protein 34 (CCDC34) of Homo sapiens (Human).